The sequence spans 70 residues: DNA-directed RNA polymerase subunit omega (70 aa).

This sequence belongs to the RNA polymerase subunit omega family. The RNAP catalytic core consists of 2 alpha, 1 beta, 1 beta' and 1 omega subunit. When a sigma factor is associated with the core the holoenzyme is formed, which can initiate transcription.

The enzyme catalyses RNA(n) + a ribonucleoside 5'-triphosphate = RNA(n+1) + diphosphate. Functionally, promotes RNA polymerase assembly. Latches the N- and C-terminal regions of the beta' subunit thereby facilitating its interaction with the beta and alpha subunits. The protein is DNA-directed RNA polymerase subunit omega of Staphylococcus epidermidis (strain ATCC 35984 / DSM 28319 / BCRC 17069 / CCUG 31568 / BM 3577 / RP62A).